Consider the following 423-residue polypeptide: MLDIKLIRSNPEILKKALQKRKDNFDVNGLLSLDEKRRKTLVELEQLRNKQNENSKLIPKYKKEGKDVSSLMEEMKSLSEKIKALDAEVRKIDEELNAILLTIPNIPHESVPMGDSDEDNVEVRRWGEPRKFDFTPKPHWEIGENLDILDFSKAAKVTGARFTFYKGLGARLERALMNFMLDLHVDKHGYVEVFPPFLVHRNSMIGTGQLPKFEEDAFKVSDTDYFLIPTAEVPVTNMYREQILDVKDLPIKHVAYSACFRAEAGAAGRDTRGLIRQHQFNKVELVKFTTPETSYEELEKLTRDAEEVLQMLEIPYRVVKICVGDLGFTAAMKYDIEVWMPSYNRYVEISSCSNFEDFQARRAGIKFRRGLNEKPEFVHTLNGSGVAMGRATACILENYQQEDGSVVVPKVLREYLGGISVIK.

230–232 contacts L-serine; it reads TAE. 261 to 263 provides a ligand contact to ATP; it reads RAE. Glu284 provides a ligand contact to L-serine. ATP is bound at residue 348-351; sequence EISS. Residue Ser384 coordinates L-serine.

Belongs to the class-II aminoacyl-tRNA synthetase family. Type-1 seryl-tRNA synthetase subfamily. As to quaternary structure, homodimer. The tRNA molecule binds across the dimer.

The protein localises to the cytoplasm. The enzyme catalyses tRNA(Ser) + L-serine + ATP = L-seryl-tRNA(Ser) + AMP + diphosphate + H(+). It catalyses the reaction tRNA(Sec) + L-serine + ATP = L-seryl-tRNA(Sec) + AMP + diphosphate + H(+). The protein operates within aminoacyl-tRNA biosynthesis; selenocysteinyl-tRNA(Sec) biosynthesis; L-seryl-tRNA(Sec) from L-serine and tRNA(Sec): step 1/1. Catalyzes the attachment of serine to tRNA(Ser). Is also able to aminoacylate tRNA(Sec) with serine, to form the misacylated tRNA L-seryl-tRNA(Sec), which will be further converted into selenocysteinyl-tRNA(Sec). The protein is Serine--tRNA ligase of Acetivibrio thermocellus (strain ATCC 27405 / DSM 1237 / JCM 9322 / NBRC 103400 / NCIMB 10682 / NRRL B-4536 / VPI 7372) (Clostridium thermocellum).